Consider the following 266-residue polypeptide: BTB/POZ domain-containing protein KCTD2 (266 aa).

A2 carries the N-acetylalanine modification. The interval 38-79 is disordered; it reads GRHPADTAASPPPPRTAGARARTSGADGRRRGRPLGPAQRGR. Positions 53–63 are enriched in low complexity; sequence TAGARARTSGA. The 99-residue stretch at 76 to 174 folds into the BTB domain; it reads QRGRYLLRDT…LVKERIRDNE (99 aa).

This chain is BTB/POZ domain-containing protein KCTD2 (Kctd2), found in Mus musculus (Mouse).